Reading from the N-terminus, the 2512-residue chain is MSTHSTVETLDVNRVRELLRSHREASSHCDEPRFTATHTKGRVVASSEKPPVSFTIANGQIVSDSEVITSTEAKAAAILSVISSYPKEIREQLNGRIERGFTDNPDVDEAARCIHSARLHNITTTALRKKPLLVHENVSNDMERFLNEKFLGYKIRLTFSKNVAHNNAAALRRVLRFYMRDKVGYRKDDDIPDGYHVKNKDVGASGMDVIADELTDVHCCTPDLDFRDHIRLERLKKYIYSHVCPTSKDHGIICEGFREGSTKYRCENIGQQCYIEAPTLTFVHSAYDITAAGIVDCMIAANAHHAIMCLHFPSAILSGSTSGKDDLLQYKWDIVVEDGIKYYKQKFLNDTQASYVHRLDVYLDKFLTKVVLGSDKRFYMFEITEMFGSVAIIEVFRREKDFIAGSKLTFNIPRTEHPNTVTIHTWEYVTGYESLFKGRNGLKSGVMRPVSIEVPEEFFLSVFKYGMTVDSNKFVYDGLLKSGVGIAARRNIGGTTMVDPSFPIPVRKLQTFIVTMYMLLYQEKWEATQGLVTMKMLADQYRTRSSKNGIVRFLTNVFSPDKVGETQHPSSTYDLGKLGFSHSEDNKFVCDRNLNTEERSRLSQFERLVQWFREFSRVHRKCPIVVHDSTHMLEYVLDIPDMVVQNIKSLRDDLTLSNLCDHDFDAYLPSHIEVNDAKCTKDLTVIQVPGDGNCLYYCFVKACLYRGISVCDLKSRLRDSPYFLEVAKLARDAGEDEFLDSLERDGVYGNKFTLILISKTFNVNICVHLKGGRELITHFISNKGSRFIHLQLEHSHYSLLVPCIKAGLIDEHVLCHGALSMVVPTTHDYRRLVDLYKIYTRDGTIASYFNIFNNSYKGPFLNVYELGFMEIASSLEIPSSSGNKFLITDVWLHHCIKALRVLDPHSNVIVLRSSNTSRIPDRYGVCDFTMDSEFHEESFCLSTTLSDVLNLGIYSQCMVVFSDLSRVPLKPFAPGFRTRTSVAERSNKILLAWSALSSGGTAVFRVFRPEEVPESLNMLTTLFEDIRFFKPKAISTSIVDGYLLCSGKRSHPGSEFSITSEVRNHFYTVNVENFYKQTLEESEVSNYVKDLCGLYAGGGFVKPTRKHSYNRSFVLDRSLILSKLMEFSSSVSFGLFGRKFSTYKLHVGCDTKLKFCNRSIEEILDSQCLHCKYSKYDFNSLRSVSDLASFATRERAVVVETFDDCGDYVSIISFFHKLYSMCFKDLRVVSDCFLNNVVLKSFLAYARCYSDVEISLCQLKGRLLVDITCRSSWYNGCEFGDFELVSCNRHDYDTAFVEVLIQHAMHNQRYNNETIVINSRADAIRAGLSVRKFKPCGDVLDDLNKSVKYKPKFVTYNTESLVNSIKAIVGVGDETTKEPTDNSVVEKPVVVFEKVDSPNLDDRIKAVYEYRSYMGRELSHSNDVLEKTVSNLLRFTETRDPKRLNEMYFPNSSFLSDEMKLKDSVGIITCNGKILKNSEPIVQFDDISAVYDIVNGSVVDKSDYFKMHRGKTTKQVGGFAIYTSLVAHNQVESILKAVDCVYASEKINDLSAISIDWVQAVAGAGKTTLLVETFLITDLVVCPTVENRDSIRLRIKRRYPDLDPKEVDCRVRTINGYLVDFSTKLAKVTLNENTRLLVDEAIMYHAGCLFVLCMIYNIRRMFCVGDKKQIPFVSRIDFKLNYEKLCDFVNTEARPLARTFRSPPDVTYRMQQIYGKSLKGLTIQCLSKNQDTSPSVSKLVITKNYRFGQNFIREVFEKDKIDFDGKNLRILFFLREDMLSFYGNGGMIFTDCCSTIHQFQGSDAEYVVVMRLTYAEKSIFMDERQCLVALTRHTKRMVYVSVNEGTDVLTRWINMPVVESMLVPHLSLSGGGTTTPSRYVTYRSIPSVDLMKGDKCVRVGYHPRSDIILDKRDTLTAVLNKIADARPKGNLVVSSAVLDKFNQQRLKPLLKSIVGHSNIFCAGVNSNINSTVFEVMQLNAVDHVPNHFIDPIFDDDVVRSADIGYKPYRQHDNHDPVLSDYGFDDKFAVIQNFLCTTFPNSCYVPNYMDAWITYNLDLDLAIDDIVINVIKFATIDRTYDCMIPRLSFCSPVVRKACLVESLIAVQKRNRNVPQLSSEVSPYVMADQLFDSLRSLLDERYYQEVHYGPAELAAWLNDQKGSVVDEVIGEYCIYSTAVERYQLITKNSPKPTLSDEAYMEFAAPQVVLHQTKDINAVFCVIWRGIKTVVQSMLRHHNNIFMFADMDPDSFADLLTEKVSTKVQETFDSLEIDIKKYDKSQDLKVLLLECKLLRYFGVSEELVIIWFKSHVESIVKDRRSGLKFKVQVQRRSGDGGTFIGNTLFLIALCARNFDLRKLKLAVFSGDDSLLVGEKRDLQCDSQNFSDLFNLDVKFFPNFKYYHFCSKFLIAVEDRWYFIPDPVKLCIRLARLDLVNWGHIEEYRISLKDTTKYYCDDSIVRELSKAVCDRYPVAVDPAEVFRVVCSIVSSKDEFRLLFEEPLACLPEGNLLPVIN.

One can recognise an Alphavirus-like MT domain in the interval 156–367; that stretch reads RLTFSKNVAH…RLDVYLDKFL (212 aa). Residues 683 to 803 form the OTU domain; that stretch reads LTVIQVPGDG…HSHYSLLVPC (121 aa). The region spanning 1520–1696 is the (+)RNA virus helicase ATP-binding domain; sequence AIYTSLVAHN…DFVNTEARPL (177 aa). Residues 1697 to 1874 enclose the (+)RNA virus helicase C-terminal domain; it reads ARTFRSPPDV…HLSLSGGGTT (178 aa). The RdRp catalytic domain maps to 2265-2378; that stretch reads FDSLEIDIKK…VGEKRDLQCD (114 aa).

It catalyses the reaction ATP + H2O = ADP + phosphate + H(+). The catalysed reaction is RNA(n) + a ribonucleoside 5'-triphosphate = RNA(n+1) + diphosphate. RNA replication. The central part of this protein possibly functions as an ATP-binding helicase (Potential). This chain is RNA replication protein, found in Citrus leprosis virus C (isolate Citrus sinesis/Brazil/Cordeiropolis/2003) (CiLV-C).